The chain runs to 471 residues: Tryptophanase (471 aa).

Residues lysine 5, lysine 115, and lysine 156 each carry the N6-acetyllysine modification. Lysine 270 is modified (N6-(pyridoxal phosphate)lysine). N6-acetyllysine is present on lysine 450.

The protein belongs to the beta-eliminating lyase family. In terms of assembly, homotetramer. Pyridoxal 5'-phosphate serves as cofactor.

It carries out the reaction L-tryptophan + H2O = indole + pyruvate + NH4(+). The protein operates within amino-acid degradation; L-tryptophan degradation via pyruvate pathway; indole and pyruvate from L-tryptophan: step 1/1. The protein is Tryptophanase of Escherichia coli O139:H28 (strain E24377A / ETEC).